A 92-amino-acid polypeptide reads, in one-letter code: Auxin-responsive protein SAUR28 (92 aa).

The protein belongs to the ARG7 family. In terms of tissue distribution, higher expression in thermo-responsive cultivars (e.g. cv. Alst-1, cv. Ang-0 and cv. Com-0) than in low thermo-responsive cultivars (e.g. cv. Dja-1, cv. El-0 and cv. Kon).

Its subcellular location is the cell membrane. Its function is as follows. Functions as a positive effector of cell expansion through modulation of auxin transport. Involved in thermo-responsiveness of plant architecture. Enhances plasma membrane H(+)-ATPase. The sequence is that of Auxin-responsive protein SAUR28 from Arabidopsis thaliana (Mouse-ear cress).